Consider the following 149-residue polypeptide: Phosphoribosyl-AMP cyclohydrolase (149 aa).

Asp92 contacts Mg(2+). Cys93 is a binding site for Zn(2+). Mg(2+) is bound by residues Asp94 and Asp96. 2 residues coordinate Zn(2+): Cys111 and Cys118.

The protein belongs to the PRA-CH family. Homodimer. Mg(2+) serves as cofactor. It depends on Zn(2+) as a cofactor.

It is found in the cytoplasm. It catalyses the reaction 1-(5-phospho-beta-D-ribosyl)-5'-AMP + H2O = 1-(5-phospho-beta-D-ribosyl)-5-[(5-phospho-beta-D-ribosylamino)methylideneamino]imidazole-4-carboxamide. It functions in the pathway amino-acid biosynthesis; L-histidine biosynthesis; L-histidine from 5-phospho-alpha-D-ribose 1-diphosphate: step 3/9. Functionally, catalyzes the hydrolysis of the adenine ring of phosphoribosyl-AMP. This is Phosphoribosyl-AMP cyclohydrolase from Rhizobium rhizogenes (strain K84 / ATCC BAA-868) (Agrobacterium radiobacter).